A 213-amino-acid chain; its full sequence is Glycerol-3-phosphate acyltransferase (213 aa).

Transmembrane regions (helical) follow at residues 2–22, 54–74, 80–100, 110–130, 143–163, and 165–185; these read ITIV…GLWI, MATF…PIMF, SPLI…FAGF, AGVV…VFFG, VTAS…GFIL, and NYDP…IIRH.

The protein belongs to the PlsY family. Probably interacts with PlsX.

The protein localises to the cell membrane. The enzyme catalyses an acyl phosphate + sn-glycerol 3-phosphate = a 1-acyl-sn-glycero-3-phosphate + phosphate. Its pathway is lipid metabolism; phospholipid metabolism. Its function is as follows. Catalyzes the transfer of an acyl group from acyl-phosphate (acyl-PO(4)) to glycerol-3-phosphate (G3P) to form lysophosphatidic acid (LPA). This enzyme utilizes acyl-phosphate as fatty acyl donor, but not acyl-CoA or acyl-ACP. The chain is Glycerol-3-phosphate acyltransferase from Streptococcus pneumoniae (strain Taiwan19F-14).